Here is a 157-residue protein sequence, read N- to C-terminus: Small ribosomal subunit protein uS7 (157 aa).

It belongs to the universal ribosomal protein uS7 family. As to quaternary structure, part of the 30S ribosomal subunit. Contacts proteins S9 and S11.

One of the primary rRNA binding proteins, it binds directly to 16S rRNA where it nucleates assembly of the head domain of the 30S subunit. Is located at the subunit interface close to the decoding center, probably blocks exit of the E-site tRNA. The polypeptide is Small ribosomal subunit protein uS7 (Chloroflexus aggregans (strain MD-66 / DSM 9485)).